Consider the following 490-residue polypeptide: MTERVDPKKLIKGGLHDWEVVIGMEIHAQVTSRSKLFSGASTEFGGEPNDHVSLVDAAMPGMLPVINEECVAQAVRTGLGLKAQINLRSVFDRKNYFYPDLPQGYQISQYKDPIVGEGEVLVDLPEGESMTVGIERLHLEQDAGKSLHDQDPTKSFVDLNRSGVALMEIVSRPDLRSSEEARAYVTKLRTILRYLGTCDGDMEKGSLRADVNVSVRRPGEPLGTRCEIKNVNSIRFIGQAIETEARRQIAILEDGGKIDQETRLYDPGKGETRSMRSKEEAHDYRYFPDPDLLPLEFDQAYVDALASGLPELPDAKKARFIKDFGLSAYDAGVLVAERASADYFEAVARGRDGKAAANWVINELFGRLNKEGRSIEDTPVSAEQLGTIVDLIGDGVISGKIAKDLFEIVWSEGGDPRAIVEARGMKQVTDTGAIEAAVDAIIAANPDKVEQAKAKPTLLGWFVGQTMKATGGKANPAAVNALLKDKLGIE.

It belongs to the GatB/GatE family. GatB subfamily. In terms of assembly, heterotrimer of A, B and C subunits.

The catalysed reaction is L-glutamyl-tRNA(Gln) + L-glutamine + ATP + H2O = L-glutaminyl-tRNA(Gln) + L-glutamate + ADP + phosphate + H(+). It catalyses the reaction L-aspartyl-tRNA(Asn) + L-glutamine + ATP + H2O = L-asparaginyl-tRNA(Asn) + L-glutamate + ADP + phosphate + 2 H(+). Its function is as follows. Allows the formation of correctly charged Asn-tRNA(Asn) or Gln-tRNA(Gln) through the transamidation of misacylated Asp-tRNA(Asn) or Glu-tRNA(Gln) in organisms which lack either or both of asparaginyl-tRNA or glutaminyl-tRNA synthetases. The reaction takes place in the presence of glutamine and ATP through an activated phospho-Asp-tRNA(Asn) or phospho-Glu-tRNA(Gln). This chain is Aspartyl/glutamyl-tRNA(Asn/Gln) amidotransferase subunit B, found in Methylorubrum extorquens (strain PA1) (Methylobacterium extorquens).